A 248-amino-acid polypeptide reads, in one-letter code: 1-(5-phosphoribosyl)-5-[(5-phosphoribosylamino)methylideneamino] imidazole-4-carboxamide isomerase (248 aa).

Residue Asp-8 is the Proton acceptor of the active site. Asp-130 functions as the Proton donor in the catalytic mechanism.

It belongs to the HisA/HisF family.

It localises to the cytoplasm. It catalyses the reaction 1-(5-phospho-beta-D-ribosyl)-5-[(5-phospho-beta-D-ribosylamino)methylideneamino]imidazole-4-carboxamide = 5-[(5-phospho-1-deoxy-D-ribulos-1-ylimino)methylamino]-1-(5-phospho-beta-D-ribosyl)imidazole-4-carboxamide. Its pathway is amino-acid biosynthesis; L-histidine biosynthesis; L-histidine from 5-phospho-alpha-D-ribose 1-diphosphate: step 4/9. The sequence is that of 1-(5-phosphoribosyl)-5-[(5-phosphoribosylamino)methylideneamino] imidazole-4-carboxamide isomerase from Alkalilimnicola ehrlichii (strain ATCC BAA-1101 / DSM 17681 / MLHE-1).